The following is a 347-amino-acid chain: Fatty acid elongase 2 (347 aa).

The Lumenal segment spans residues 1–62 (MNSLVTQYAA…PSEFQFIAGE (62 aa)). An N-linked (GlcNAc...) asparagine glycan is attached at Asn32. The chain crosses the membrane as a helical span at residues 63–83 (LPLSTLPPVLYAITAYYVIIF). Residues 84 to 96 (GGRFLLSKSKPFK) lie on the Cytoplasmic side of the membrane. Residues 97–119 (LNGLFQLHNLVLTSLSLTLLLLM) form a helical membrane-spanning segment. Over 120–122 (VEQ) the chain is Lumenal. The helical transmembrane segment at 123–142 (LVPIIVQHGLYFAICNIGAW) threads the bilayer. At 143 to 146 (TQPL) the chain is on the cytoplasmic side. Residues 147 to 169 (VTLYYMNYIVKFIEFIDTFFLVL) traverse the membrane as a helical segment. At 170-200 (KHKKLTFLHTYHHGATALLCYTQLMGTTSIS) the chain is on the lumenal side. The short motif at 178–182 (HTYHH) is the HxxHH motif element. The helical transmembrane segment at 201-221 (WVPISLNLGVHVVMYWYYFLA) threads the bilayer. Residues 222–231 (ARGIRVWWKE) are Cytoplasmic-facing. A helical membrane pass occupies residues 232–254 (WVTRFQIIQFVLDIGFIYFAVYQ). The Lumenal segment spans residues 255 to 275 (KAVHLYFPILPHCGDCVGSTT). The chain crosses the membrane as a helical span at residues 276 to 296 (ATFAGCAIISSYLVLFISFYI). The Cytoplasmic segment spans residues 297 to 347 (NVYKRKGTKTSRVVKRAHGGVAAKVNEYVNVDLKNVPTPSPSPKPQHRRKR). Thr334 carries the post-translational modification Phosphothreonine. Ser336 and Ser338 each carry phosphoserine. Residues 344-347 (RRKR) carry the Di-lysine-like motif motif.

The protein belongs to the ELO family.

The protein localises to the endoplasmic reticulum membrane. The enzyme catalyses a very-long-chain acyl-CoA + malonyl-CoA + H(+) = a very-long-chain 3-oxoacyl-CoA + CO2 + CoA. It catalyses the reaction octadecanoyl-CoA + malonyl-CoA + H(+) = 3-oxoeicosanoyl-CoA + CO2 + CoA. The catalysed reaction is hexadecanoyl-CoA + malonyl-CoA + H(+) = 3-oxooctadecanoyl-CoA + CO2 + CoA. It carries out the reaction eicosanoyl-CoA + malonyl-CoA + H(+) = 3-oxodocosanoyl-CoA + CO2 + CoA. The enzyme catalyses docosanoyl-CoA + malonyl-CoA + H(+) = 3-oxotetracosanoyl-CoA + CO2 + CoA. Its function is as follows. Component of a microsomal membrane-bound long-chain fatty acid elongation system, which produces the 20-26-carbon very long-chain fatty acids (VLCFA) from long-chain fatty acid precursors and is involved ceramide and inositol sphingolipid biosynthesis. Component of elongase II, which elongates 16-18 carbon fatty acyl-CoAs such as palmitoyl-CoA and stearoyl-CoA to 20-22-carbon fatty acids by incorporation of malonyl-CoA. Involved in the synthesis of 1,3-beta-glucan. The enzymes active site faces the cytosol, whereas VLCFA length is determined by a lysine near the luminal end of transmembrane helix 6. Plays an important role in lipotoxic cell death induced by oleic acid through maintaining a balanced fatty acid composition in thr plasma membrane. In Saccharomyces cerevisiae (strain ATCC 204508 / S288c) (Baker's yeast), this protein is Fatty acid elongase 2.